The following is a 661-amino-acid chain: Lateral signaling target protein 2 (661 aa).

The disordered stretch occupies residues 294–432; the sequence is VPEDTSSTLT…SDDEITDDVQ (139 aa). Residues 297 to 310 show a composition bias toward polar residues; it reads DTSSTLTMSDFRTN. Low complexity-rich tracts occupy residues 330–360 and 381–393; these read SDSTSSLDSSVQDSSSETTSLASSALASPHS and TNSNSSNEVTESP. Positions 394-411 are enriched in acidic residues; that stretch reads ETIEEPDNVDMEESSESE. Residues 412 to 422 show a composition bias toward basic and acidic residues; that stretch reads VDTHIDETRNE. The FYVE-type zinc finger occupies 566-626; the sequence is DEDCEQCTAC…VCNLCYVHRL (61 aa). Zn(2+) is bound by residues C572, C575, C588, C591, C596, C599, C618, and C621. The segment covering 641–650 has biased composition (polar residues); sequence NGATVPSVTE. The tract at residues 641 to 661 is disordered; it reads NGATVPSVTEQQSAQTASASS. Over residues 651 to 661 the composition is skewed to low complexity; sequence QQSAQTASASS.

It belongs to the lst-2 family. As to expression, expressed in vulval precursor cells (VPCs).

In terms of biological role, negative regulator of epidermal growth factor receptor (EGFR) signaling. This chain is Lateral signaling target protein 2 (lst-2), found in Caenorhabditis elegans.